Here is a 424-residue protein sequence, read N- to C-terminus: MSNLIPPHGGKGLVCCLLEGAELEAEKKKAATLPKLNISSRAKGDLIMMGIGGFSPLDGFMTKADWKGVCEDFLLADGTFWPIPVTLDASADDAAKINVGDEIALFDPEREEFMATMKVTEKYEMTEADKIFECEKVFMGEGTPTAEEFWKIAKDDHPGVQMVMNQGEFNLAGPVKVLSEAEYPEEYPGIYQRPAESRAIFEERGWKEIAAMQLRNPMHRSHEYLCKIAIEVCDGCFIHSLIGNLKPGDIPADVRVKCIDALVKNYFVEDKAVQGGYPLDMRYAGPREGLLHATFRQNYGCSRMIIGRDHAGVGDFYGMFEAQTIFDKIPTPEGEGKALLCTPLKIDWTFYCYKCDGMASLRTCPHAKEDRVLLSGTMLRKMLSEGGELPDHFGRDEVVAILREYYEGLTEKVEVKLHGAATGN.

The protein belongs to the sulfate adenylyltransferase family.

It catalyses the reaction sulfate + ATP + H(+) = adenosine 5'-phosphosulfate + diphosphate. Its pathway is sulfur metabolism; hydrogen sulfide biosynthesis; sulfite from sulfate: step 1/3. The polypeptide is Sulfate adenylyltransferase (Desulfatibacillum aliphaticivorans).